The sequence spans 330 residues: MKTAYIAKQRQISFVKSHFSRQLEERLGLIEVQAPILSRVGDGTQDNLSGCEKAVQVKVKALPDAQFEVVHSLAKWKRQTLGQHDFSAGEGLYTHMKALRPDEDRLSPLHSVYVDQWDWERVMGDGERQFSTLKSTVEAIWAGIKATEAAVSEEFGLAPFLPDQIHFVHSQELLSRYPDLDAKGRERAIAKDLGAVFLVGIGGKLSDGHRHDVRAPDYDDWSTPSELGHAGLNGDILVWNPVLEDAFELSSMGIRVDAETLKHQLALTGDEDRLQLDWHQALLRGEMPQTIGGGIGQSRLTMLLLQLPHIGQVQCGVWPAAVRESVPSLL.

It belongs to the class-II aminoacyl-tRNA synthetase family. AsnA subfamily.

The protein resides in the cytoplasm. The catalysed reaction is L-aspartate + NH4(+) + ATP = L-asparagine + AMP + diphosphate + H(+). It participates in amino-acid biosynthesis; L-asparagine biosynthesis; L-asparagine from L-aspartate (ammonia route): step 1/1. The protein is Aspartate--ammonia ligase of Escherichia fergusonii (strain ATCC 35469 / DSM 13698 / CCUG 18766 / IAM 14443 / JCM 21226 / LMG 7866 / NBRC 102419 / NCTC 12128 / CDC 0568-73).